Here is a 229-residue protein sequence, read N- to C-terminus: Large ribosomal subunit protein bL25 (229 aa).

Disordered regions lie at residues 1–21 (MSDA…GASR) and 187–229 (PSAL…KGDD). Residues 196-207 (SEEEEDGEEVDA) show a composition bias toward acidic residues.

This sequence belongs to the bacterial ribosomal protein bL25 family. CTC subfamily. In terms of assembly, part of the 50S ribosomal subunit; part of the 5S rRNA/L5/L18/L25 subcomplex. Contacts the 5S rRNA. Binds to the 5S rRNA independently of L5 and L18.

Functionally, this is one of the proteins that binds to the 5S RNA in the ribosome where it forms part of the central protuberance. In Erythrobacter litoralis (strain HTCC2594), this protein is Large ribosomal subunit protein bL25.